The primary structure comprises 380 residues: Cytochrome b (380 aa).

The next 4 helical transmembrane spans lie at 34 to 54 (FGSL…ILAM), 78 to 100 (WLMR…AHMG), 113 to 133 (TWNI…MGYV), and 179 to 199 (FFAF…VHLL). 2 residues coordinate heme b: His84 and His98. 2 residues coordinate heme b: His183 and His197. An a ubiquinone-binding site is contributed by His202. The next 4 helical transmembrane spans lie at 225-245 (FSWK…TITL), 289-309 (LGGV…MLTH), 324-344 (VIFW…AAPV), and 349-369 (ITLG…APMI).

This sequence belongs to the cytochrome b family. In terms of assembly, the main subunits of complex b-c1 are: cytochrome b, cytochrome c1 and the Rieske protein. Heme b is required as a cofactor.

Its subcellular location is the mitochondrion inner membrane. Component of the ubiquinol-cytochrome c reductase complex (complex III or cytochrome b-c1 complex) that is part of the mitochondrial respiratory chain. The b-c1 complex mediates electron transfer from ubiquinol to cytochrome c. Contributes to the generation of a proton gradient across the mitochondrial membrane that is then used for ATP synthesis. This Xenoturbella bocki (Marine worm) protein is Cytochrome b (mt:Cyt-b).